The primary structure comprises 191 residues: Amelogenin, X isoform (191 aa).

The first 16 residues, 1 to 16 (MGTWILFACLLGAAFA), serve as a signal peptide directing secretion. Phosphoserine is present on Ser-32. The span at 95 to 117 (IPQQPMMPVPGQHSMTPIQHHQP) shows a compositional bias: low complexity. Positions 95 to 191 (IPQQPMMPVP…TDKTKREEVD (97 aa)) are disordered. Over residues 118–171 (NLPPPAQQPYQPQPVQPQPHQPMQPQPPVHPMQPLPPQPPLPPMFPMQPLPPML) the composition is skewed to pro residues.

The protein belongs to the amelogenin family. As to quaternary structure, interacts with KRT5. In terms of processing, phosphorylated by FAM20C in vitro.

It localises to the secreted. The protein localises to the extracellular space. Its subcellular location is the extracellular matrix. Functionally, plays a role in biomineralization. Seems to regulate the formation of crystallites during the secretory stage of tooth enamel development. Thought to play a major role in the structural organization and mineralization of developing enamel. The protein is Amelogenin, X isoform (AMELX) of Homo sapiens (Human).